The chain runs to 241 residues: Ureidoacrylate amidohydrolase RutB (241 aa).

Catalysis depends on Asp38, which acts as the Proton acceptor. Residue Lys147 is part of the active site. Cys180 acts as the Nucleophile in catalysis.

Belongs to the isochorismatase family. RutB subfamily.

The catalysed reaction is (Z)-3-ureidoacrylate + H2O + H(+) = (Z)-3-aminoacrylate + NH4(+) + CO2. It carries out the reaction (Z)-3-ureidoacrylate + H2O = (Z)-3-aminoacrylate + carbamate + H(+). The enzyme catalyses (Z)-2-methylureidoacrylate + H2O + H(+) = (Z)-2-methylaminoacrylate + NH4(+) + CO2. Its function is as follows. Hydrolyzes ureidoacrylate to form aminoacrylate and carbamate. The carbamate hydrolyzes spontaneously, thereby releasing one of the nitrogen atoms of the pyrimidine ring as ammonia and one of its carbon atoms as CO2. This Haliangium ochraceum (strain DSM 14365 / JCM 11303 / SMP-2) protein is Ureidoacrylate amidohydrolase RutB.